The chain runs to 367 residues: Metacaspase-1 (367 aa).

The segment at 47 to 77 (DPRTAPPPQPSSAPSPPPQIHAPPGQLPHPH) is disordered. Residues 50-73 (TAPPPQPSSAPSPPPQIHAPPGQL) show a composition bias toward pro residues. Active-site residues include His-164 and Cys-220.

The protein belongs to the peptidase C14B family. In terms of assembly, interacts (via N-terminus) with LSD1. In terms of processing, proteolytically processed; by an autocatalytic mechanism.

Its function is as follows. Cysteine protease that cleaves specifically after arginine or lysine residues. Does not cleave caspase-specific substrates. Acts as a positive regulator of cell death. Required for both oxidative stress cell death response and hypersensitive cell death response mediated by immune response. The polypeptide is Metacaspase-1 (AMC1) (Arabidopsis thaliana (Mouse-ear cress)).